The following is a 161-amino-acid chain: MSGKGAPELSVRNCGDLRVAVIAAQWHEKVMDGLVDGALRALHELGIDEPTLLRVPGSFELPVVAKVLAGRGYDAIVALGVVIRGGTPHFDFVCQGVTQGLTQVSVDTGVPVGFGVLTCDTEEQALDRAGIEGSHEDKGHEAVTAAVATAATLRSVSEPWR.

Residues Trp-26, 58 to 60 (SFE), and 81 to 83 (VVI) contribute to the 5-amino-6-(D-ribitylamino)uracil site. Position 86 to 87 (86 to 87 (GT)) interacts with (2S)-2-hydroxy-3-oxobutyl phosphate. Residue His-89 is the Proton donor of the active site. A 5-amino-6-(D-ribitylamino)uracil-binding site is contributed by Phe-114. Arg-128 contributes to the (2S)-2-hydroxy-3-oxobutyl phosphate binding site.

This sequence belongs to the DMRL synthase family.

The catalysed reaction is (2S)-2-hydroxy-3-oxobutyl phosphate + 5-amino-6-(D-ribitylamino)uracil = 6,7-dimethyl-8-(1-D-ribityl)lumazine + phosphate + 2 H2O + H(+). It functions in the pathway cofactor biosynthesis; riboflavin biosynthesis; riboflavin from 2-hydroxy-3-oxobutyl phosphate and 5-amino-6-(D-ribitylamino)uracil: step 1/2. Catalyzes the formation of 6,7-dimethyl-8-ribityllumazine by condensation of 5-amino-6-(D-ribitylamino)uracil with 3,4-dihydroxy-2-butanone 4-phosphate. This is the penultimate step in the biosynthesis of riboflavin. This is 6,7-dimethyl-8-ribityllumazine synthase from Streptomyces avermitilis (strain ATCC 31267 / DSM 46492 / JCM 5070 / NBRC 14893 / NCIMB 12804 / NRRL 8165 / MA-4680).